The sequence spans 262 residues: Small ribosomal subunit protein eS4 (262 aa).

The S4 RNA-binding domain occupies 42–105 (LPLXVFLRNR…NEHFRLAYDV (64 aa)).

The protein belongs to the eukaryotic ribosomal protein eS4 family.

The polypeptide is Small ribosomal subunit protein eS4 (RPS4) (Candida albicans (Yeast)).